Here is a 146-residue protein sequence, read N- to C-terminus: Protein disulfide-isomerase 5-1 (146 aa).

An N-terminal signal peptide occupies residues 1-25 (MTLGARLVAPMIILLLFIPIELVKA). The region spanning 26-133 (EVITLTPETF…LKAFVVEETE (108 aa)) is the Thioredoxin domain. Residues C55 and C58 each act as nucleophile in the active site. A disulfide bridge links C55 with C58.

Belongs to the protein disulfide isomerase family.

In terms of biological role, acts as a protein-folding catalyst that interacts with nascent polypeptides to catalyze the formation, isomerization, and reduction or oxidation of disulfide bonds. The polypeptide is Protein disulfide-isomerase 5-1 (PDIL5-1) (Arabidopsis thaliana (Mouse-ear cress)).